A 614-amino-acid polypeptide reads, in one-letter code: Probable zinc transporter protein DDB_G0269332 (614 aa).

Disordered regions lie at residues 1 to 103 (MSDI…LPHL) and 115 to 178 (SSYN…NNEF). Topologically, residues 1-203 (MSDINSNSYD…NLNRDSDAKK (203 aa)) are cytoplasmic. Residues 17 to 64 (QHQQESQYHPQQQQQQQQQQQQQQEYYNQQHQQESQYQQQSPPQQQYD) are compositionally biased toward low complexity. The segment covering 80 to 92 (GHGRSHNSGHGHS) has biased composition (basic residues). Positions 121–176 (NNSGDISNSNNNNNNNNQYNYNNNNNNNNYNNNINNNQFNSSVYNNNNNNNNNNNN) are enriched in low complexity. Residues 204–224 (LAAWISVMLVFTIYEIFYGAY) form a helical membrane-spanning segment. Residues 225-233 (LESLGLVSD) are Extracellular-facing. The helical transmembrane segment at 234–254 (GFHALFDCIGMGIALLAMLVG) threads the bilayer. Residues 255–270 (KRGISNQEYTYGYDRW) lie on the Cytoplasmic side of the membrane. Residues 271–291 (EVLGTFSNGCFLLFVSFFLFL) traverse the membrane as a helical segment. The Extracellular segment spans residues 292–306 (ESIERLLEPPHIHNH). The helical transmembrane segment at 307–327 (GRVMSLATISLIINIVGVLFF) threads the bilayer. The Cytoplasmic portion of the chain corresponds to 328–351 (KQKSNERKQQSSIRSENLLTISHH). Residues 352–372 (ILVDSCTSLGVILSSLVGQAF) traverse the membrane as a helical segment. Topologically, residues 373 to 377 (GLEIS) are extracellular. Residues 378–398 (DSLISIIIACIIVYNALPICI) form a helical membrane-spanning segment. Topologically, residues 399–614 (KTSAILLQTT…NSSHSHAHNH (216 aa)) are cytoplasmic. The tract at residues 483–614 (EGKHNSHSHG…NSSHSHAHNH (132 aa)) is disordered. Basic residues-rich tracts occupy residues 487 to 499 (NSHS…HHPH) and 507 to 523 (SHNH…HGHS). The span at 525 to 535 (GGNDDHEHGEN) shows a compositional bias: basic and acidic residues. Residues 548 to 567 (VQPTSPFSSHYTDIHSNNTP) show a composition bias toward polar residues. The span at 575–585 (QDDEDDEDDYD) shows a compositional bias: acidic residues. Positions 586 to 599 (HDEHHHDHDHDEHH) are enriched in basic and acidic residues. Residues 600-614 (HGHSHNSSHSHAHNH) show a composition bias toward basic residues.

It belongs to the cation diffusion facilitator (CDF) transporter (TC 2.A.4) family. SLC30A subfamily.

It localises to the membrane. Its function is as follows. May be involved in zinc transport from the cytoplasm to either intracellular organelles or extracellular spaces. The polypeptide is Probable zinc transporter protein DDB_G0269332 (Dictyostelium discoideum (Social amoeba)).